Here is a 385-residue protein sequence, read N- to C-terminus: Chorismate synthase (385 aa).

Residues 43–63 are disordered; the sequence is PDLDRRRPGTSRHVTQRNEPD. 2 residues coordinate NADP(+): arginine 48 and arginine 54. FMN is bound by residues 125–127, 238–239, glycine 278, 293–297, and arginine 319; these read RSS, NA, and KPTSS. Residues 363–372 are compositionally biased toward low complexity; it reads AQAPRTETAP. The tract at residues 363–385 is disordered; that stretch reads AQAPRTETAPATPPLDAGDDIEA.

This sequence belongs to the chorismate synthase family. Homotetramer. Requires FMNH2 as cofactor.

It catalyses the reaction 5-O-(1-carboxyvinyl)-3-phosphoshikimate = chorismate + phosphate. Its pathway is metabolic intermediate biosynthesis; chorismate biosynthesis; chorismate from D-erythrose 4-phosphate and phosphoenolpyruvate: step 7/7. Its function is as follows. Catalyzes the anti-1,4-elimination of the C-3 phosphate and the C-6 proR hydrogen from 5-enolpyruvylshikimate-3-phosphate (EPSP) to yield chorismate, which is the branch point compound that serves as the starting substrate for the three terminal pathways of aromatic amino acid biosynthesis. This reaction introduces a second double bond into the aromatic ring system. This Leptothrix cholodnii (strain ATCC 51168 / LMG 8142 / SP-6) (Leptothrix discophora (strain SP-6)) protein is Chorismate synthase.